The primary structure comprises 1049 residues: Presequence protease, mitochondrial (1049 aa).

A mitochondrion-targeting transit peptide spans 1 to 39 (MLRSYLHLGRHRTPAFRQPLGRLLRPTASILQYAQSRTL). His-113 provides a ligand contact to Zn(2+). Residue Glu-116 is the Proton acceptor of the active site. His-117 is a binding site for Zn(2+). Glu-189 is an active-site residue. Glu-222 is a binding site for Zn(2+).

The protein belongs to the peptidase M16 family. PreP subfamily. In terms of assembly, monomer and homodimer; homodimerization is induced by binding of the substrate. Requires Zn(2+) as cofactor.

The protein resides in the mitochondrion intermembrane space. The protein localises to the mitochondrion matrix. In terms of biological role, degrades mitochondrial transit peptides after their cleavage in the intermembrane space or in the matrix, and presequence peptides; clearance of these peptides is required to keep the presequence processing machinery running. Preferentially cleaves the N-terminal side of paired basic amino acid residues. Also degrades other unstructured peptides. May function as an ATP-dependent peptidase as opposed to a metalloendopeptidase. This is Presequence protease, mitochondrial (cym1) from Emericella nidulans (strain FGSC A4 / ATCC 38163 / CBS 112.46 / NRRL 194 / M139) (Aspergillus nidulans).